Consider the following 599-residue polypeptide: THO complex subunit 1 (599 aa).

Disordered stretches follow at residues Glu376–Arg395 and Lys497–Ser599. Residues Pro502–Glu522 show a composition bias toward basic and acidic residues. The span at Gln575–Gly585 shows a compositional bias: acidic residues.

In terms of assembly, component of the THO complex, which is composed of THO1, THO2, THO3, THO5, THO6 and THO7.

Its subcellular location is the nucleus. In terms of biological role, acts as a component of the THO subcomplex of the TREX complex which is thought to couple mRNA transcription, processing and nuclear export. Contributes to the integrity of the endogenous trans-acting small interfering RNA (ta-siRNA) pathway. May process or transport a long RNA molecule so that it can be a template for secondary siRNA production. May participate in the trafficking of siRNA precursors to the ARGONAUTE catalytic center. Required for the generation of functional messenger ribonucleoproteins (mRNPs). Plays an important roles in plant innate immunity. The chain is THO complex subunit 1 (THO1) from Arabidopsis thaliana (Mouse-ear cress).